A 159-amino-acid chain; its full sequence is MTQPTRPSVTCDQGSSTIGGTAAQATTSSSATSGSNYQRDRLGRRPEIGVGGQPQICFPRPRSAQQPVLFSLMNSSEAAMKKTLPKSHLSRVIIHDNRITQRIYEMEVSALEKTKKKISHYYEHLKKKFMTEQLRKLGRWREESVNSNRYLTFGIPPPV.

Over residues 1–13 the composition is skewed to polar residues; it reads MTQPTRPSVTCDQ. Positions 1-57 are disordered; sequence MTQPTRPSVTCDQGSSTIGGTAAQATTSSSATSGSNYQRDRLGRRPEIGVGGQPQIC. Low complexity predominate over residues 14 to 35; sequence GSSTIGGTAAQATTSSSATSGS. The segment covering 38-47 has biased composition (basic and acidic residues); it reads QRDRLGRRPE.

This is an uncharacterized protein from Homo sapiens (Human).